The primary structure comprises 885 residues: DNA-directed RNA polymerase subunit Rpo1N (885 aa).

Zn(2+) contacts are provided by Cys-60, Cys-63, Cys-70, His-73, Cys-100, Cys-103, Cys-150, and Cys-153. 3 residues coordinate Mg(2+): Asp-464, Asp-466, and Asp-468.

This sequence belongs to the RNA polymerase beta' chain family. Part of the RNA polymerase complex. The cofactor is Mg(2+). Requires Zn(2+) as cofactor.

It localises to the cytoplasm. It catalyses the reaction RNA(n) + a ribonucleoside 5'-triphosphate = RNA(n+1) + diphosphate. DNA-dependent RNA polymerase (RNAP) catalyzes the transcription of DNA into RNA using the four ribonucleoside triphosphates as substrates. Forms the clamp head domain. The protein is DNA-directed RNA polymerase subunit Rpo1N of Thermoplasma acidophilum (strain ATCC 25905 / DSM 1728 / JCM 9062 / NBRC 15155 / AMRC-C165).